We begin with the raw amino-acid sequence, 375 residues long: Beta-1,3-N-acetylglucosaminyltransferase lunatic fringe (375 aa).

Residues Met1–Lys8 lie on the Cytoplasmic side of the membrane. Residues Leu9–Gln29 traverse the membrane as a helical; Signal-anchor for type II membrane protein segment. Over Ser30–Tyr375 the chain is Lumenal. Residues Asp53–Gly73 are disordered. A substrate-binding site is contributed by Arg125. The N-linked (GlcNAc...) asparagine glycan is linked to Asn163. 2 disulfides stabilise this stretch: Cys164–Cys175 and Cys193–Cys256. Position 197 (Asp197) interacts with substrate. Asp198 is a binding site for Mn(2+). Residue Asp286 is part of the active site. Residue His310 coordinates Mn(2+). Cys360 and Cys369 are disulfide-bonded.

Belongs to the glycosyltransferase 31 family. Mn(2+) is required as a cofactor. Requires Co(2+) as cofactor. Post-translationally, a soluble form may be derived from the membrane form by proteolytic processing. In terms of tissue distribution, detected in the neural tube, the eye and the otic vesicle, expression coincides with the region that produces the medial, intermediate and lateral neurons.

It localises to the golgi apparatus membrane. The enzyme catalyses 3-O-(alpha-L-fucosyl)-L-threonyl-[EGF-like domain protein] + UDP-N-acetyl-alpha-D-glucosamine = 3-O-(N-acetyl-beta-D-glucosaminyl-(1-&gt;3)-alpha-L-fucosyl)-L-threonyl-[EGF-like domain protein] + UDP + H(+). It carries out the reaction 3-O-(alpha-L-fucosyl)-L-seryl-[EGF-like domain protein] + UDP-N-acetyl-alpha-D-glucosamine = 3-O-(N-acetyl-beta-D-glucosaminyl-(1-&gt;3)-alpha-L-fucosyl)-L-seryl-[EGF-like domain protein] + UDP + H(+). Glycosyltransferase that initiates the elongation of O-linked fucose residues attached to EGF-like repeats in the extracellular domain of Notch molecules. Essential mediator of somite segmentation and patterning. May be involved in mesoderm development. The polypeptide is Beta-1,3-N-acetylglucosaminyltransferase lunatic fringe (lfng) (Xenopus laevis (African clawed frog)).